Here is a 245-residue protein sequence, read N- to C-terminus: Orotidine 5'-phosphate decarboxylase (245 aa).

Substrate-binding positions include D22, K44, D71–T80, T131, R192, Q201, G221, and R222. Catalysis depends on K73, which acts as the Proton donor.

It belongs to the OMP decarboxylase family. Type 1 subfamily. Homodimer.

It catalyses the reaction orotidine 5'-phosphate + H(+) = UMP + CO2. Its pathway is pyrimidine metabolism; UMP biosynthesis via de novo pathway; UMP from orotate: step 2/2. Functionally, catalyzes the decarboxylation of orotidine 5'-monophosphate (OMP) to uridine 5'-monophosphate (UMP). The polypeptide is Orotidine 5'-phosphate decarboxylase (Salmonella newport (strain SL254)).